A 325-amino-acid chain; its full sequence is Tagatose 1,6-diphosphate aldolase 1 (325 aa).

The protein belongs to the aldolase LacD family.

The enzyme catalyses D-tagatofuranose 1,6-bisphosphate = D-glyceraldehyde 3-phosphate + dihydroxyacetone phosphate. Its pathway is carbohydrate metabolism; D-tagatose 6-phosphate degradation; D-glyceraldehyde 3-phosphate and glycerone phosphate from D-tagatose 6-phosphate: step 2/2. The polypeptide is Tagatose 1,6-diphosphate aldolase 1 (lacD1) (Streptococcus mutans serotype c (strain ATCC 700610 / UA159)).